A 138-amino-acid polypeptide reads, in one-letter code: Transcription antitermination protein NusB (138 aa).

This sequence belongs to the NusB family.

Its function is as follows. Involved in transcription antitermination. Required for transcription of ribosomal RNA (rRNA) genes. Binds specifically to the boxA antiterminator sequence of the ribosomal RNA (rrn) operons. This Helicobacter pylori (strain J99 / ATCC 700824) (Campylobacter pylori J99) protein is Transcription antitermination protein NusB.